Consider the following 1707-residue polypeptide: Latrophilin Cirl (1707 aa).

Residues 1–767 (MLPTILSISY…LFTMFDGNMR (767 aa)) are Extracellular-facing. The region spanning 25–114 (ACEGKKLTIE…KYLEAHYQCI (90 aa)) is the SUEL-type lectin domain. Asparagine 142 carries N-linked (GlcNAc...) asparagine glycosylation. A disordered region spans residues 176–301 (GLFNVPPQHT…TAASGAVVPG (126 aa)). Polar residues-rich tracts occupy residues 185 to 198 (TAVTHSTPSSSTTA) and 256 to 265 (NATSPSNTRI). Residue asparagine 256 is glycosylated (N-linked (GlcNAc...) asparagine). Residues 275 to 285 (DDGTLLTTKSS) show a composition bias toward low complexity. Residues asparagine 302, asparagine 341, asparagine 398, asparagine 655, asparagine 703, and asparagine 730 are each glycosylated (N-linked (GlcNAc...) asparagine). Residues 376 to 400 (YDEYDDDPSSTTPAPNGGDCLHNSS) are disordered. In terms of domain architecture, GAIN-B spans 561 to 754 (RSVVQKVKNI…AILMDVVDEH (194 aa)). 2 disulfide bridges follow: cysteine 709–cysteine 736 and cysteine 724–cysteine 738. The tract at residues 709 to 754 (CVFWNYIDHAWSANGCSLESTNRTHSVCSCNHLTNFAILMDVVDEH) is GPS. Residues 768 to 788 (IFIYISIGICVVFIVIALLTL) form a helical membrane-spanning segment. Over 789–801 (KLFNGVFVKSART) the chain is Cytoplasmic. Residues 802–822 (SIYTSIYLCLLAIELLFLLGI) form a helical membrane-spanning segment. Residues 823-828 (EQTETS) are Extracellular-facing. The chain crosses the membrane as a helical span at residues 829 to 849 (IFCGFITIFLHCAILSGTAWF). Topologically, residues 850–875 (CYEAFHSYSTLTSDELLLEVDQTPKV) are cytoplasmic. The helical transmembrane segment at 876 to 896 (NCYYLLSYGLSLSVVAISLVI) threads the bilayer. The Extracellular segment spans residues 897–920 (DPSTYTQNDYCVLMEANALFYATF). The chain crosses the membrane as a helical span at residues 921-941 (VIPVLVFFVAAIGYTFLSWII). The Cytoplasmic portion of the chain corresponds to 942 to 968 (LCRKSRTGLKTKEHTRLASVRFDIRCS). The chain crosses the membrane as a helical span at residues 969 to 989 (FVFLLLLSAVWCSSYFYLRGA). Residues 990-999 (KMDDDTADVY) are Extracellular-facing. The helical transmembrane segment at 1000–1020 (GYCFICFNTLLGLYIFVFHCI) threads the bilayer. Over 1021-1707 (QNEKIRREYR…VRCYLEPLAK (687 aa)) the chain is Cytoplasmic. A Phosphoserine modification is found at serine 1156. Disordered stretches follow at residues 1169–1188 (AHKQQQQQQQQQQGPLGEGY) and 1236–1260 (KPNSGQHGKKKRGAGGVPASPSGSL). Positions 1172-1181 (QQQQQQQQQQ) are enriched in low complexity. Serine 1255 and serine 1262 each carry phosphoserine. Residues 1316–1326 (QQLHQQQQQQL) show a composition bias toward low complexity. 4 disordered regions span residues 1316–1335 (QQLHQQQQQQLSSDEEQVEQ), 1450–1538 (GGGS…SDER), 1563–1582 (APLDYGALPPGSGPQPEHNG), and 1612–1687 (GGRL…QQRH). Phosphoserine is present on residues serine 1327 and serine 1328. A compositionally biased stretch (low complexity) spans 1456–1481 (GGSVSSRSQQQQLKKQQQQQSLAQQR). 2 stretches are compositionally biased toward acidic residues: residues 1489-1503 (DDDDDEEEEEDEEAT) and 1513-1526 (CDEDEEEDESDLED). A compositionally biased stretch (polar residues) spans 1635–1650 (QTPAQKRQQLQKLSPQ). Residues 1651-1673 (STTSSSSHTSHSNPNPHPLQLTH) are compositionally biased toward low complexity. The span at 1674 to 1686 (PHPHQHPPHHQQR) shows a compositional bias: basic residues.

The protein belongs to the G-protein coupled receptor 2 family. LN-TM7 subfamily. Forms a heterodimer, consisting of a large extracellular region non-covalently linked to a seven-transmembrane moiety. Post-translationally, proteolytically cleaved into 2 subunits, an extracellular subunit and a seven-transmembrane subunit.

It localises to the cell membrane. This Drosophila yakuba (Fruit fly) protein is Latrophilin Cirl.